Here is a 434-residue protein sequence, read N- to C-terminus: Methylenetetrahydrofolate--tRNA-(uracil-5-)-methyltransferase TrmFO (434 aa).

Gly8 to Gly13 is a binding site for FAD.

Belongs to the MnmG family. TrmFO subfamily. FAD serves as cofactor.

Its subcellular location is the cytoplasm. The enzyme catalyses uridine(54) in tRNA + (6R)-5,10-methylene-5,6,7,8-tetrahydrofolate + NADH + H(+) = 5-methyluridine(54) in tRNA + (6S)-5,6,7,8-tetrahydrofolate + NAD(+). The catalysed reaction is uridine(54) in tRNA + (6R)-5,10-methylene-5,6,7,8-tetrahydrofolate + NADPH + H(+) = 5-methyluridine(54) in tRNA + (6S)-5,6,7,8-tetrahydrofolate + NADP(+). In terms of biological role, catalyzes the folate-dependent formation of 5-methyl-uridine at position 54 (M-5-U54) in all tRNAs. The polypeptide is Methylenetetrahydrofolate--tRNA-(uracil-5-)-methyltransferase TrmFO (Exiguobacterium sibiricum (strain DSM 17290 / CCUG 55495 / CIP 109462 / JCM 13490 / 255-15)).